The primary structure comprises 175 residues: Photosynthetic NDH subunit of subcomplex B 4, chloroplastic (175 aa).

The transit peptide at 1–24 (MAEAFTSFTFTNLHIPSSYNHSPK) directs the protein to the chloroplast. A helical membrane pass occupies residues 95–111 (VYMFYIMFTCWGCLYFG).

As to quaternary structure, part of the chloroplast NDH complex, composed of a mixture of chloroplast and nucleus encoded subunits. Component of the NDH subcomplex B, at least composed of PnsB1, PnsB2, PnsB3, PnsB4 and PnsB5.

The protein resides in the plastid. It localises to the chloroplast thylakoid membrane. In terms of biological role, NDH shuttles electrons from NAD(P)H:plastoquinone, via FMN and iron-sulfur (Fe-S) centers, to quinones in the photosynthetic chain and possibly in a chloroplast respiratory chain. The immediate electron acceptor for the enzyme in this species is believed to be plastoquinone. Couples the redox reaction to proton translocation, and thus conserves the redox energy in a proton gradient. The chain is Photosynthetic NDH subunit of subcomplex B 4, chloroplastic from Arabidopsis thaliana (Mouse-ear cress).